The sequence spans 82 residues: uncharacterized protein (82 aa).

The protein belongs to the chlamydial CPn_0710/CT_666/TC_0037 family.

This is an uncharacterized protein from Chlamydia muridarum (strain MoPn / Nigg).